The chain runs to 292 residues: Arabinose operon regulatory protein (292 aa).

Residues Pro-8, Thr-24, Arg-38, Tyr-82, and His-93 each contribute to the alpha-L-arabinopyanose site. Positions 180–279 (REACQYISDH…GASPSEFRAG (100 aa)) constitute an HTH araC/xylS-type domain. 2 DNA-binding regions (H-T-H motif) span residues 198–219 (ASVA…RQQL) and 246–269 (IATV…KKCT).

As to quaternary structure, homodimer.

It is found in the cytoplasm. With respect to regulation, arabinose converts the repressor form of AraC to the activator form to regulate the araBAD promoter. In the absence of arabinose, AraC binds to the araO2 and araI1 half-sites in the promoter region of the araBAD operon, leading to the formation of a DNA loop that blocks access of RNA polymerase to the promoter. In the presence of arabinose and the cyclic AMP receptor protein (CRP), it binds to the adjacent half-sites araI1 and araI2, leading to the binding of RNA polymerase to the promoter region and transcription of the araBAD operon. AraI1 acts as a switch mechanism allowing both the repressor and the activator forms of AraC protein to regulate the araBAD promoter. Inhibited by D-fucose, which binds competitively to the same site on the protein. In terms of biological role, transcription factor that regulates the expression of several genes involved in the transport and metabolism of L-arabinose. Functions both as a positive and a negative regulator. In the presence of arabinose, activates the expression of the araBAD, araE, araFGH and araJ promoters. In the absence of arabinose, negatively regulates the araBAD operon. Represses its own transcription. Acts by binding directly to DNA. The polypeptide is Arabinose operon regulatory protein (Escherichia coli (strain K12)).